The following is a 107-amino-acid chain: DNA polymerase delta subunit 4 (107 aa).

A PCNA-interaction protein motif (PIP box) motif is present at residues 1–16; the sequence is MGRKRFITDSYPVVKK. The disordered stretch occupies residues 1–40; it reads MGRKRFITDSYPVVKKREGPPGHSKGELAPELGEDTQSLS. Residues 15-28 show a composition bias toward basic and acidic residues; sequence KKREGPPGHSKGEL.

Belongs to the DNA polymerase delta subunit 4 family. As to quaternary structure, component of the tetrameric DNA polymerase delta complex (Pol-delta4), which consists of POLD1/p125, POLD2/p50, POLD3/p66/p68 and POLD4/p12, with POLD1 bearing DNA polymerase and 3' to 5' proofreading exonuclease activities. Within this complex, directly interacts with POLD1 and POLD2. Directly interacts with PCNA, as do POLD1 and POLD3; this interaction stimulates Pol-delta4 polymerase activity. As POLD1 and POLD2, directly interacts with WRNIP1; this interaction stimulates DNA polymerase delta-mediated DNA synthesis, independently of the presence of PCNA, possibly by increasing initiation frequency. Upon genotoxic stress induced by DNA damaging agents or by replication stress, POLD4 is proteolytically degraded and Pol-delta4 is converted into a trimeric form of the complex (Pol-delta3) that has an increased proofreading activity. The DNA polymerase delta complex interacts with POLDIP2; this interaction is probably mediated through direct binding to POLD2. Ubiquitinated; undergoes 'Lys-48'-linked polyubiquitination in response to UV irradiation or treatment with an alkylating agent, leading to proteasomal degradation. This modification is mediated, at least in part, by RNF8. Post-translationally, ubiquitinated; undergoes 'Lys-48'-linked ubiquitination in response to UV irradiation, leading to proteasomal degradation. This modification is partly mediated by RNF8 and by the DCX(DTL) E3 ubiquitin ligase complex (also called CRL4(CDT2)). Efficient degradation requires the presence of PCNA and is required for the inhibition of fork progression after DNA damage.

It localises to the nucleus. In terms of biological role, as a component of the tetrameric DNA polymerase delta complex (Pol-delta4), plays a role in high fidelity genome replication and repair. Within this complex, increases the rate of DNA synthesis and decreases fidelity by regulating POLD1 polymerase and proofreading 3' to 5' exonuclease activity. Pol-delta4 participates in Okazaki fragment processing, through both the short flap pathway, as well as a nick translation system. Under conditions of DNA replication stress, required for the repair of broken replication forks through break-induced replication (BIR), a mechanism that may induce segmental genomic duplications of up to 200 kb. Involved in Pol-delta4 translesion synthesis (TLS) of templates carrying O6-methylguanine or abasic sites. Its degradation in response to DNA damage is required for the inhibition of fork progression and cell survival. The chain is DNA polymerase delta subunit 4 (Pold4) from Mus musculus (Mouse).